Consider the following 324-residue polypeptide: Galectin-4 (324 aa).

2 Galectin domains span residues 19 to 150 (YKRP…INFL) and 196 to 324 (YVGT…YVQI). 257–263 (WGSEERK) is a binding site for a beta-D-galactoside. At S259 the chain carries Phosphoserine.

As to quaternary structure, monomer. As to expression, highly expressed in full-length form in small and large intestine and stomach but was not detected in other tissues including lung, liver, kidney and spleen.

Functionally, galectin that binds lactose and a related range of sugars. This chain is Galectin-4 (Lgals4), found in Rattus norvegicus (Rat).